Consider the following 184-residue polypeptide: Photosystem I assembly protein Ycf4 (184 aa).

The next 2 helical transmembrane spans lie at 22–42 (FCWA…GTSS) and 57–77 (ILFF…LFIS).

This sequence belongs to the Ycf4 family.

It localises to the plastid. The protein resides in the chloroplast thylakoid membrane. Seems to be required for the assembly of the photosystem I complex. This is Photosystem I assembly protein Ycf4 from Chloranthus spicatus (Chulantree).